Here is a 259-residue protein sequence, read N- to C-terminus: Protein odd-skipped-related 1 (259 aa).

3 consecutive C2H2-type zinc fingers follow at residues 168 to 190 (FVCKFCGRHFTKSYNLLIHERTH), 196 to 218 (YTCDICHKAFRRQDHLRDHRYIH), and 224 to 246 (FKCQECGKGFCQSRTLAVHKTLH).

This sequence belongs to the Odd C2H2-type zinc-finger protein family. At early gastrula stage, expressed in the involuting mesoderm and endoderm. During neurulation, expressed in the pronephric primordium, following expression of osr2. During tailbud (stage 35), expressed in the rectal diverticulum and in the kidney ducts.

The protein localises to the nucleus. Functionally, transcriptional repressor. Required for pronephric kidney development. This is Protein odd-skipped-related 1 from Xenopus laevis (African clawed frog).